The following is a 1256-amino-acid chain: Putative protein DDB_G0292252 (1256 aa).

Disordered regions lie at residues 1–53 (MSDD…NNNN), 145–243 (LLNG…SISR), 898–951 (EQQQ…PVET), and 1069–1136 (SHPT…ATIS). A compositionally biased stretch (low complexity) spans 147–214 (NGNNSNNNSN…NGNNINTSNG (68 aa)). A compositionally biased stretch (polar residues) spans 222–243 (QTESTEQDFTSTSQNSTPSISR). 2 stretches are compositionally biased toward low complexity: residues 898–916 (EQQQ…SNNE) and 925–942 (TTAA…TTTT). The span at 1069 to 1079 (SHPTIQSTSSP) shows a compositional bias: polar residues. The span at 1080–1136 (STSSSNNNNSTTTATNNNGNNGNNNNGNGNNNNNNNNNNNNNNNNNNNNNNGPATIS) shows a compositional bias: low complexity.

This Dictyostelium discoideum (Social amoeba) protein is Putative protein DDB_G0292252.